Consider the following 732-residue polypeptide: MDLNDLKFIEEQLGRKPNDVEIGMFENLWSEHCSYRSTKKLLSMFGKTVKENQNIVVGPGDDAALIKIDDETDLCVAMAMESHNHPSYIDPYNGAATGVGGIVRDIISMNAKPIALLNALRFGDINGEEKDKVRWLVEGVVDGIRDYGNRIGVPNVGGECEFDKSYDYNNLVNVVCIGLVKEGDIVTGKAKETDLTLILVGSTGRDGIGGASFASKDLTSESEGDRPSVQIGDAFTEKCVIDSTLEACATKKVKAIKDLGAAGITSSCSELCYSGGVGAELYLENVILRDEGMTAYEIMVSESQERMLLAVEKGSEEEIIKIFEKYELPVSIIGKTTDTKRFFVKMNDEVVVDLPLDLLCEATLTDSEEKETILETPDNKENIAEPEPAELNNILLKLLKSPNINSKKWIYEQYDHEVQLNTVVRPGKDASVLRLKEAHPKALALVADCNPTYCKLNPYGGSLNLVCESVRNLATVGAKPIGMLDNLNFGNPEKPERFYQIKKCIEGLADGAEIIGVPVVGGNVSLYNETVIDGKDYPINPTPVISIVGTIENINNIPKGAKEGDILIITAPTKDEMGGTEYYKQIHNTEEGIVPKANLEVEKEIYSKVCELVNNGLINEAVDCSKGGLGVAISKLCMTNNIGVELDLGDYNTNGLRNDILLFSESSGRIILSVDKNNADKVVKELNGAIIGTVKGNELKIKLNDNELINLPIEEMKNKYENAFSEMMGENI.

Histidine 32 is an active-site residue. Tyrosine 35 serves as a coordination point for ATP. Position 81 (glutamate 81) interacts with Mg(2+). Substrate contacts are provided by residues 82–85 (SHNH) and arginine 104. Residue histidine 83 is the Proton acceptor of the active site. Aspartate 105 contributes to the Mg(2+) binding site. Substrate is bound at residue glutamine 230. Aspartate 258 is a Mg(2+) binding site. 302–304 (ESQ) contributes to the substrate binding site. ATP contacts are provided by aspartate 485 and glycine 522. Asparagine 523 serves as a coordination point for Mg(2+). Residue serine 525 coordinates substrate.

The protein belongs to the FGAMS family. In terms of assembly, monomer. Part of the FGAM synthase complex composed of 1 PurL, 1 PurQ and 2 PurS subunits.

It localises to the cytoplasm. The enzyme catalyses N(2)-formyl-N(1)-(5-phospho-beta-D-ribosyl)glycinamide + L-glutamine + ATP + H2O = 2-formamido-N(1)-(5-O-phospho-beta-D-ribosyl)acetamidine + L-glutamate + ADP + phosphate + H(+). Its pathway is purine metabolism; IMP biosynthesis via de novo pathway; 5-amino-1-(5-phospho-D-ribosyl)imidazole from N(2)-formyl-N(1)-(5-phospho-D-ribosyl)glycinamide: step 1/2. Its function is as follows. Part of the phosphoribosylformylglycinamidine synthase complex involved in the purines biosynthetic pathway. Catalyzes the ATP-dependent conversion of formylglycinamide ribonucleotide (FGAR) and glutamine to yield formylglycinamidine ribonucleotide (FGAM) and glutamate. The FGAM synthase complex is composed of three subunits. PurQ produces an ammonia molecule by converting glutamine to glutamate. PurL transfers the ammonia molecule to FGAR to form FGAM in an ATP-dependent manner. PurS interacts with PurQ and PurL and is thought to assist in the transfer of the ammonia molecule from PurQ to PurL. This Methanococcus aeolicus (strain ATCC BAA-1280 / DSM 17508 / OCM 812 / Nankai-3) protein is Phosphoribosylformylglycinamidine synthase subunit PurL.